Consider the following 137-residue polypeptide: Histone H2B (137 aa).

Basic and acidic residues predominate over residues 1–10; it reads MPPKAADKKP. A disordered region spans residues 1-45; that stretch reads MPPKAADKKPANKAPATASKAPEKKDAGKKTAASGEKKKRTKARK. 2 positions are modified to N6-acetyllysine; alternate: Lys8 and Lys9. Glycyl lysine isopeptide (Lys-Gly) (interchain with G-Cter in SUMO); alternate cross-links involve residues Lys8 and Lys9. At Lys13 the chain carries N6-acetyllysine. Residue Lys24 is modified to N6-acetyllysine; alternate. Lys24 is covalently cross-linked (Glycyl lysine isopeptide (Lys-Gly) (interchain with G-Cter in SUMO); alternate). Residue Lys25 forms a Glycyl lysine isopeptide (Lys-Gly) (interchain with G-Cter in SUMO) linkage. Lys131 participates in a covalent cross-link: Glycyl lysine isopeptide (Lys-Gly) (interchain with G-Cter in ubiquitin).

The protein belongs to the histone H2B family. In terms of assembly, the nucleosome is a histone octamer containing two molecules each of H2A, H2B, H3 and H4 assembled in one H3-H4 heterotetramer and two H2A-H2B heterodimers. The octamer wraps approximately 147 bp of DNA. Monoubiquitinated to form H2BK123ub1. H2BK123ub1 gives a specific tag for epigenetic transcriptional activation and is also prerequisite for H3K4me and H3K79me formation. H2BK123ub1 also modulates the formation of double-strand breaks during meiosis and is a prerequisite for DNA-damage checkpoint activation. Post-translationally, acetylated by GCN5 to form H2BK11ac and H2BK16ac. H2BK16ac can also be formed by ESA1. Acetylation of N-terminal lysines and particularly formation of H2BK11acK16ac has a positive effect on transcription. In terms of processing, sumoylation to form H2BK6su or H2BK7su, and probably also H2BK16su or H2BK17su, occurs preferentially near the telomeres and represses gene transcription.

The protein resides in the nucleus. It localises to the chromosome. Its function is as follows. Core component of nucleosome. Nucleosomes wrap and compact DNA into chromatin, limiting DNA accessibility to the cellular machineries which require DNA as a template. Histones thereby play a central role in transcription regulation, DNA repair, DNA replication and chromosomal stability. DNA accessibility is regulated via a complex set of post-translational modifications of histones, also called histone code, and nucleosome remodeling. The protein is Histone H2B (HTB1) of Podospora anserina (Pleurage anserina).